Here is a 60-residue protein sequence, read N- to C-terminus: Large ribosomal subunit protein bL32 (60 aa).

The segment covering 1-19 (MAVPKRKKSKSRRNMHRSH) has biased composition (basic residues). The disordered stretch occupies residues 1 to 24 (MAVPKRKKSKSRRNMHRSHHAIEP).

This sequence belongs to the bacterial ribosomal protein bL32 family.

This is Large ribosomal subunit protein bL32 from Wolbachia pipientis wMel.